The following is a 230-amino-acid chain: Large ribosomal subunit protein uL1 (230 aa).

It belongs to the universal ribosomal protein uL1 family. In terms of assembly, part of the 50S ribosomal subunit.

Functionally, binds directly to 23S rRNA. The L1 stalk is quite mobile in the ribosome, and is involved in E site tRNA release. In terms of biological role, protein L1 is also a translational repressor protein, it controls the translation of the L11 operon by binding to its mRNA. The sequence is that of Large ribosomal subunit protein uL1 from Chromohalobacter salexigens (strain ATCC BAA-138 / DSM 3043 / CIP 106854 / NCIMB 13768 / 1H11).